The primary structure comprises 141 residues: Nucleoside diphosphate kinase (141 aa).

Residues K11, F59, R87, T93, R104, and N114 each contribute to the ATP site. Catalysis depends on H117, which acts as the Pros-phosphohistidine intermediate.

Belongs to the NDK family. As to quaternary structure, homotetramer. It depends on Mg(2+) as a cofactor.

It is found in the cytoplasm. It carries out the reaction a 2'-deoxyribonucleoside 5'-diphosphate + ATP = a 2'-deoxyribonucleoside 5'-triphosphate + ADP. The catalysed reaction is a ribonucleoside 5'-diphosphate + ATP = a ribonucleoside 5'-triphosphate + ADP. Functionally, major role in the synthesis of nucleoside triphosphates other than ATP. The ATP gamma phosphate is transferred to the NDP beta phosphate via a ping-pong mechanism, using a phosphorylated active-site intermediate. The protein is Nucleoside diphosphate kinase of Vibrio parahaemolyticus serotype O3:K6 (strain RIMD 2210633).